The following is a 232-amino-acid chain: Phosphatidylserine decarboxylase proenzyme (232 aa).

Residue Ser-190 is the Schiff-base intermediate with substrate; via pyruvic acid of the active site. At Ser-190 the chain carries Pyruvic acid (Ser); by autocatalysis.

This sequence belongs to the phosphatidylserine decarboxylase family. PSD-A subfamily. As to quaternary structure, heterodimer of a large membrane-associated beta subunit and a small pyruvoyl-containing alpha subunit. It depends on pyruvate as a cofactor. Is synthesized initially as an inactive proenzyme. Formation of the active enzyme involves a self-maturation process in which the active site pyruvoyl group is generated from an internal serine residue via an autocatalytic post-translational modification. Two non-identical subunits are generated from the proenzyme in this reaction, and the pyruvate is formed at the N-terminus of the alpha chain, which is derived from the carboxyl end of the proenzyme. The post-translation cleavage follows an unusual pathway, termed non-hydrolytic serinolysis, in which the side chain hydroxyl group of the serine supplies its oxygen atom to form the C-terminus of the beta chain, while the remainder of the serine residue undergoes an oxidative deamination to produce ammonia and the pyruvoyl prosthetic group on the alpha chain.

The protein resides in the cell membrane. It catalyses the reaction a 1,2-diacyl-sn-glycero-3-phospho-L-serine + H(+) = a 1,2-diacyl-sn-glycero-3-phosphoethanolamine + CO2. Its pathway is phospholipid metabolism; phosphatidylethanolamine biosynthesis; phosphatidylethanolamine from CDP-diacylglycerol: step 2/2. Its function is as follows. Catalyzes the formation of phosphatidylethanolamine (PtdEtn) from phosphatidylserine (PtdSer). The polypeptide is Phosphatidylserine decarboxylase proenzyme (Brucella canis (strain ATCC 23365 / NCTC 10854 / RM-666)).